Reading from the N-terminus, the 194-residue chain is Probable thymidylate kinase (194 aa).

7–14 (GIDGSGKT) contributes to the ATP binding site.

This sequence belongs to the thymidylate kinase family.

It carries out the reaction dTMP + ATP = dTDP + ADP. The sequence is that of Probable thymidylate kinase (tmk) from Methanothermobacter thermautotrophicus (strain ATCC 29096 / DSM 1053 / JCM 10044 / NBRC 100330 / Delta H) (Methanobacterium thermoautotrophicum).